The chain runs to 269 residues: Tryptophan synthase alpha chain (269 aa).

Residues Glu49 and Asp60 each act as proton acceptor in the active site.

Belongs to the TrpA family. In terms of assembly, tetramer of two alpha and two beta chains.

It catalyses the reaction (1S,2R)-1-C-(indol-3-yl)glycerol 3-phosphate + L-serine = D-glyceraldehyde 3-phosphate + L-tryptophan + H2O. The protein operates within amino-acid biosynthesis; L-tryptophan biosynthesis; L-tryptophan from chorismate: step 5/5. The alpha subunit is responsible for the aldol cleavage of indoleglycerol phosphate to indole and glyceraldehyde 3-phosphate. This Buchnera aphidicola subsp. Acyrthosiphon pisum (strain APS) (Acyrthosiphon pisum symbiotic bacterium) protein is Tryptophan synthase alpha chain.